The chain runs to 223 residues: Putative germin-like protein 2-3 (223 aa).

A signal peptide spans 1-28 (MAAIRASFLLAAAALLALWCSDHGGVVA). A disulfide bond links Cys-38 and Cys-53. Residues 67-217 (SGLHMAGNTT…AFQVEKTVVD (151 aa)) enclose the Cupin type-1 domain. A glycan (N-linked (GlcNAc...) asparagine) is linked at Asn-74. Mn(2+)-binding residues include His-115, His-117, Glu-122, and His-163.

Belongs to the germin family. In terms of assembly, oligomer (believed to be a pentamer but probably hexamer).

It is found in the secreted. The protein localises to the extracellular space. Its subcellular location is the apoplast. May play a role in plant defense. Probably has no oxalate oxidase activity even if the active site is conserved. In Oryza sativa subsp. japonica (Rice), this protein is Putative germin-like protein 2-3.